The following is a 247-amino-acid chain: DNA polymerase sliding clamp (247 aa).

The protein belongs to the PCNA family. As to quaternary structure, homotrimer. The subunits circularize to form a toroid; DNA passes through its center. Replication factor C (RFC) is required to load the toroid on the DNA.

Its function is as follows. Sliding clamp subunit that acts as a moving platform for DNA processing. Responsible for tethering the catalytic subunit of DNA polymerase and other proteins to DNA during high-speed replication. This Halobacterium salinarum (strain ATCC 29341 / DSM 671 / R1) protein is DNA polymerase sliding clamp.